A 1279-amino-acid chain; its full sequence is MSGTKWTDEQRQAIFTKNCNLLVAAGAGAGKTAVLVQRIIEKILDKEEPIDIDKLLVVTFTNAAAAEMRERIGDAISKGLDEDPESKVLRKQLTLLNKSNIMTIHSFCLQVIKNNFHTMEIDPNFRICDETEGILMKQEAIDELFDELYEIENEDFINLVESYASRKDTRLQEVVLELHRFAKSAPFPYTWLLNMAEGFNVGENFNFEETLWADMIMEDMKVLLYGFKNMLQQSIDVILNSEGIDYYYEPFKMDLSFINSLLEKSSFKEFRGEIIAYDFPKLPLKRNKDADKEAKERVKKLRDKVKKKIVELKNILDSYENEFIKKEFIFLYPSMKALSNLVILFDKKYEAKKRERDLIDFNDIEHLCLSILTDKNSDGHIIPSDIALNYRKKFAEVLIDEYQDSNLVQEVIMSMVSRVKGYWSFYNGQLIFNEKEINLEEPQIGLDIPNRFMVGDVKQSIYRFRQAKPEIFLDKYNEYNEEEDRKNRKVKLFKNFRSREEVINGVNYLFKQIMSKTIGELDYTEEEALKVGASYGEEVKGEPIELCLMDKKYEISEEVLKEYNVDEEEALDNIQLEGRLVAKKIQKLVGNNLEGGLKVFDKKLGEYRNLQYRDIVILMRATSNWAPVFVEELAKEGIPVFADTNSGYFDTAEIKTMISLLQIIDNPLQDIPLLSVLRSPIASFTDDELIDIRMVNKNITFYECMEIIYRLYKNEKLDSYYSFYIEDENKINKIIKDMNEKLKNKICSFIEKLKLWREKSIHIDIDEFIWFLYVETGYYGYAGALQAGEQRQANLRILFQRAKQYAKTSYKGLFNFINFINKLKFSSGDMGSAKILGENENVVRIMSIHKSKGLEFPVVILSGTGKNFNMTDLNKNILFHRDLGYGPDYVDTERRIAYPSLVKNIIKNKIRLETLSEEMRILYVALTRAREKLIITGLINNMDKTVEDWLNLSEDKNKVPEYAVMSGKTYLDWIGPALIKHKDAVSFREELKMTSELSNIVDDKSKWKIELWNKRELLKEKVEEDEVEISEKIKETLMSLEESNYKEEIYKRLSFKYKYDNASSIPTKLSVSDVKKQFILDEKENTEELFKKLELRKPMFMEEKKKISPSERGTIIHLFMQHLDLKKAENEEDIKEQINRLIEREFITYEQSKVISPYKILKFCRGELGKRILNSNNVNKEMPFSIEIPALEIYKELDKEIYKNEKLIIQGVIDCYFEEEDGLVLLDYKTDYVNDIEEIKNRYEIQIKYYEEALNRITGKNVKDKYLYLFSVDNYIKID.

The UvrD-like helicase ATP-binding domain maps to T4–R499. ATP is bound at residue A25–T32. The UvrD-like helicase C-terminal domain occupies E526 to G853.

The protein belongs to the helicase family. AddA subfamily. As to quaternary structure, heterodimer of AddA and AddB/RexB. The cofactor is Mg(2+).

It carries out the reaction Couples ATP hydrolysis with the unwinding of duplex DNA by translocating in the 3'-5' direction.. The enzyme catalyses ATP + H2O = ADP + phosphate + H(+). In terms of biological role, the heterodimer acts as both an ATP-dependent DNA helicase and an ATP-dependent, dual-direction single-stranded exonuclease. Recognizes the chi site generating a DNA molecule suitable for the initiation of homologous recombination. The AddA nuclease domain is required for chi fragment generation; this subunit has the helicase and 3' -&gt; 5' nuclease activities. This is ATP-dependent helicase/nuclease subunit A from Clostridium botulinum (strain Okra / Type B1).